Here is a 648-residue protein sequence, read N- to C-terminus: RalA-binding protein 1 (648 aa).

Residues 1 to 158 form a disordered region; the sequence is MTECFLPPSS…KKSKDLTAAD (158 aa). N-acetylthreonine is present on T2. The segment covering 24–33 has biased composition (polar residues); it reads LTRTPSSEEI. 3 positions are modified to phosphoserine: S29, S30, and S34. A Phosphothreonine modification is found at T44. A phosphoserine mark is found at S48 and S62. The segment covering 52–68 has biased composition (basic and acidic residues); it reads DVLHEPPDTVSDDDKDH. 69 to 74 contributes to the ATP binding site; it reads GKKKGK. A compositionally biased stretch (basic residues) spans 69-79; sequence GKKKGKFKKKE. Residues S92 and S93 each carry the phosphoserine modification. Positions 102 to 118 are enriched in basic residues; sequence KVKRSKGIHVFKKPSFS. Positions 102–119 are nuclear localization signal; the sequence is KVKRSKGIHVFKKPSFSK. A compositionally biased stretch (basic and acidic residues) spans 119 to 155; that stretch reads KKKEKDFKIKEKPKEEKHKEEKHKEEKHKEKKSKDLT. The segment at 154-219 is mediates association with membranes and could form transmembrane domains; the sequence is LTAADVVKQW…PAVFRECVDY (66 aa). In terms of domain architecture, Rho-GAP spans 192-380; it reads VPLVDAVERT…VVLKQVTRPL (189 aa). Residues 403 to 499 are mediates interaction with RALA and RALB; that stretch reads RRQEFLLNCL…LTEQEELLAM (97 aa). Residue 418–425 participates in ATP binding; that stretch reads GGIKDLSK. A phosphoserine mark is found at S461 and S463. The segment at 500–648 is mediates interaction with REPS1 and REPS2; the sequence is EQFLRRQIAS…PSKDRKETPI (149 aa). Disordered stretches follow at residues 525-552 and 598-648; these read QSRQ…EEEL and RAKS…ETPI. Over residues 536 to 552 the composition is skewed to acidic residues; sequence EEYSSDSESESEDEEEL. Residues 629–648 show a composition bias toward basic and acidic residues; that stretch reads RVAKEQAKASPSKDRKETPI. S638 is subject to Phosphoserine.

In terms of assembly, interacts with the GTP-bound form of RALA (via effector domain); during mitosis, recruits RALBP1 to the mitochondrion where it promotes DNM1L phosphorylation and mitochondrial fission. Interacts with DNM1L; mediates its mitotic kinase cyclin B-CDK1-mediated phosphorylation during mitosis to promote mitochondrial fission. Interacts with the mitotic kinase cyclin B-CDK1 during mitosis. Interacts with the GTP-bound form of RALB (via effector domain). Interacts with REPS1; the interaction is direct and does not affect RALA-binding nor GTPase activator activity of RALBP1. Interacts with REPS2; the interaction is direct and does not affect RALA-binding nor GTPase activator activity of RALBP1. Interacts with EPN1, NUMB and TFAP2A during interphase and mitosis. Interacts with AP2M1; as part of the AP2 complex. Interacts with CDC42. Interacts with RAC1. Tyrosine-phosphorylated upon stimulation of cells with EGF. In terms of processing, may undergo proteolytic cleavage to give peptides which reassemble to form a transporter complex. In terms of tissue distribution, ubiquitous. The highest level of expression was observed in ovaries and skeletal muscle, whereas the lowest was found in spleen, liver and peripheral blood leukocytes.

The protein resides in the cell membrane. Its subcellular location is the cytoplasm. It localises to the cytosol. It is found in the cytoskeleton. The protein localises to the spindle pole. The protein resides in the nucleus. Its subcellular location is the mitochondrion. It carries out the reaction an S-substituted glutathione(in) + ATP + H2O = an S-substituted glutathione(out) + ADP + phosphate + H(+). It catalyses the reaction ATP + H2O + xenobioticSide 1 = ADP + phosphate + xenobioticSide 2.. The catalysed reaction is leukotriene C4(in) + ATP + H2O = leukotriene C4(out) + ADP + phosphate + H(+). Functionally, multifunctional protein that functions as a downstream effector of RALA and RALB. As a GTPase-activating protein/GAP can inactivate CDC42 and RAC1 by stimulating their GTPase activity. As part of the Ral signaling pathway, may also regulate ligand-dependent EGF and insulin receptors-mediated endocytosis. During mitosis, may act as a scaffold protein in the phosphorylation of EPSIN/EPN1 by the mitotic kinase cyclin B-CDK1, preventing endocytosis during that phase of the cell cycle. During mitosis, also controls mitochondrial fission as an effector of RALA. Recruited to mitochondrion by RALA, acts as a scaffold to foster the mitotic kinase cyclin B-CDK1-mediated phosphorylation and activation of DNM1L. In terms of biological role, could also function as a primary ATP-dependent active transporter for glutathione conjugates of electrophiles. May also actively catalyze the efflux of a wide range of substrates including xenobiotics like doxorubicin (DOX) contributing to cell multidrug resistance. This is RalA-binding protein 1 from Mus musculus (Mouse).